A 513-amino-acid chain; its full sequence is Glycine/sarcosine/betaine reductase complex component C subunit beta (513 aa).

Heterooctamer of four alpha and four beta subunits. Component of the glycine, sarcosine and betaine reductase complexes, together with proteins A and B.

It carries out the reaction acetyl phosphate + [thioredoxin]-disulfide + NH4(+) + H2O = [thioredoxin]-dithiol + glycine + phosphate + H(+). It catalyses the reaction acetyl phosphate + methylamine + [thioredoxin]-disulfide + H2O = sarcosine + [thioredoxin]-dithiol + phosphate + H(+). The catalysed reaction is acetyl phosphate + trimethylamine + [thioredoxin]-disulfide + H2O = glycine betaine + [thioredoxin]-dithiol + phosphate + H(+). Functionally, in the first step of glycine, betaine and sarcosine reductases, the substrate is bound to component PB via a Schiff base intermediate. Then the PB-activated substrate is nucleophilically attacked by the selenol anion of component PA to transform it to a carboxymethylated selenoether and the respective amine. By action of component PC, acetyl phosphate is formed, leaving component PA in its oxidized state. Finally component PA becomes reduced by the thioredoxin system to start a new catalytic cycle of reductive deamination. The polypeptide is Glycine/sarcosine/betaine reductase complex component C subunit beta (grdC) (Peptoclostridium acidaminophilum (Eubacterium acidaminophilum)).